The sequence spans 431 residues: Cortical fragment-lytic enzyme (431 aa).

LysM domains lie at glutamine 2–isoleucine 46 and glutamine 51–isoleucine 95. The GH18 domain occupies isoleucine 103–arginine 431. Chitin contacts are provided by residues valine 148 to alanine 149 and glutamate 174 to alanine 177. Catalysis depends on glutamate 217, which acts as the Proton donor. Residues tyrosine 218, methionine 280–glutamate 283, and tryptophan 406 contribute to the chitin site.

It belongs to the glycosyl hydrolase 18 family. Chitinase class II subfamily.

The protein localises to the spore coat. Its function is as follows. N-acetylglucosaminidase involved in cortex peptidoglycan degradation during germination. Cleaves only partially degraded spore peptidoglycans. Recognizes muramic acid delta-lactam residues specific to spore peptidoglycans. This Bacillus subtilis (strain 168) protein is Cortical fragment-lytic enzyme.